The chain runs to 138 residues: Basic phospholipase A2 beta-bungarotoxin A-AL3 chain (138 aa).

The first 10 residues, 1–10 (LAVCVSLIGA), serve as a signal peptide directing secretion. A propeptide spanning residues 11–18 (ANIPPQHL) is cleaved from the precursor. 6 disulfide bridges follow: C45/C137, C47/C63, C62/C118, C69/C111, C79/C104, and C97/C109. Residues Y46, G48, and G50 each coordinate Ca(2+). H66 is an active-site residue. Residue D67 coordinates Ca(2+). Residue D112 is part of the active site.

The protein belongs to the phospholipase A2 family. Group I subfamily. D49 sub-subfamily. In terms of assembly, heterodimer; disulfide-linked. The A chains have phospholipase A2 activity and the B chains show homology with the basic protease inhibitors. Ca(2+) is required as a cofactor. As to expression, expressed by the venom gland.

The protein resides in the secreted. The catalysed reaction is a 1,2-diacyl-sn-glycero-3-phosphocholine + H2O = a 1-acyl-sn-glycero-3-phosphocholine + a fatty acid + H(+). Its function is as follows. Snake venom phospholipase A2 (PLA2) that inhibits neuromuscular transmission by blocking acetylcholine release from the nerve termini. PLA2 catalyzes the calcium-dependent hydrolysis of the 2-acyl groups in 3-sn-phosphoglycerides. In Bungarus multicinctus (Many-banded krait), this protein is Basic phospholipase A2 beta-bungarotoxin A-AL3 chain.